Reading from the N-terminus, the 93-residue chain is Photosystem I iron-sulfur center (93 aa).

4Fe-4S ferredoxin-type domains lie at 13-43 (KDHE…MVPS) and 50-80 (QVVT…IRVY). [4Fe-4S] cluster is bound by residues Cys-23, Cys-26, Cys-29, Cys-33, Cys-60, Cys-63, Cys-66, and Cys-70.

In terms of assembly, the eukaryotic PSI reaction center is composed of at least 11 subunits. Requires [4Fe-4S] cluster as cofactor.

It localises to the plastid. Its subcellular location is the chloroplast thylakoid membrane. The enzyme catalyses reduced [plastocyanin] + hnu + oxidized [2Fe-2S]-[ferredoxin] = oxidized [plastocyanin] + reduced [2Fe-2S]-[ferredoxin]. Its function is as follows. Apoprotein for the two 4Fe-4S centers FA and FB of photosystem I (PSI); essential for photochemical activity. FB is the terminal electron acceptor of PSI, donating electrons to ferredoxin. The C-terminus interacts with PsaA/B/D and helps assemble the protein into the PSI complex. Required for binding of PsaD and PsaE to PSI. PSI is a plastocyanin-ferredoxin oxidoreductase, converting photonic excitation into a charge separation, which transfers an electron from the donor P700 chlorophyll pair to the spectroscopically characterized acceptors A0, A1, FX, FA and FB in turn. In Bigelowiella natans (Pedinomonas minutissima), this protein is Photosystem I iron-sulfur center.